The chain runs to 153 residues: 3-hydroxyacyl-[acyl-carrier-protein] dehydratase FabZ (153 aa).

Residue His-54 is part of the active site.

The protein belongs to the thioester dehydratase family. FabZ subfamily.

It localises to the cytoplasm. It catalyses the reaction a (3R)-hydroxyacyl-[ACP] = a (2E)-enoyl-[ACP] + H2O. Functionally, involved in unsaturated fatty acids biosynthesis. Catalyzes the dehydration of short chain beta-hydroxyacyl-ACPs and long chain saturated and unsaturated beta-hydroxyacyl-ACPs. This Shewanella pealeana (strain ATCC 700345 / ANG-SQ1) protein is 3-hydroxyacyl-[acyl-carrier-protein] dehydratase FabZ.